The chain runs to 20 residues: Fibrinolytic zinc metalloproteinase (20 aa).

In terms of domain architecture, Peptidase M12B spans 7-20; it reads RYVQLVITVDHVMN.

Requires Zn(2+) as cofactor.

It localises to the secreted. Its function is as follows. Hydrolyzes alpha and beta chains of human fibrinogen and human fibrin. No activity against the gamma chain of human fibrinogen, human thrombin, bovine serum albumin, ovalbumin and hemoglobin. Has anticoagulant activity on human plasma and protects mice against death due from experimentally induced platelet thromboembolism with an ED(50) of 40 ug/kg. This is Fibrinolytic zinc metalloproteinase from Ganoderma lucidum (Ling zhi medicinal fungus).